The chain runs to 466 residues: 3-isopropylmalate dehydratase large subunit (466 aa).

The [4Fe-4S] cluster site is built by C347, C407, and C410.

Belongs to the aconitase/IPM isomerase family. LeuC type 1 subfamily. In terms of assembly, heterodimer of LeuC and LeuD. The cofactor is [4Fe-4S] cluster.

The enzyme catalyses (2R,3S)-3-isopropylmalate = (2S)-2-isopropylmalate. It functions in the pathway amino-acid biosynthesis; L-leucine biosynthesis; L-leucine from 3-methyl-2-oxobutanoate: step 2/4. Catalyzes the isomerization between 2-isopropylmalate and 3-isopropylmalate, via the formation of 2-isopropylmaleate. This is 3-isopropylmalate dehydratase large subunit from Escherichia coli O45:K1 (strain S88 / ExPEC).